Reading from the N-terminus, the 638-residue chain is Chaperone protein HtpG (638 aa).

The a; substrate-binding stretch occupies residues 1-346 (MSQQETHGFQ…SNDLPLNVSR (346 aa)). A b region spans residues 347–563 (EILQDNKVTT…EGEMSTQMIK (217 aa)). The tract at residues 564-638 (LMEAAGQAVP…MNEMLLAKLK (75 aa)) is c.

It belongs to the heat shock protein 90 family. As to quaternary structure, homodimer.

The protein localises to the cytoplasm. Functionally, molecular chaperone. Has ATPase activity. In Shewanella sediminis (strain HAW-EB3), this protein is Chaperone protein HtpG.